The primary structure comprises 275 residues: Trypsin-4 (275 aa).

The first 18 residues, 1–18, serve as a signal peptide directing secretion; that stretch reads MSNKITILLAVLLAVVAC. Residues 19 to 48 constitute a propeptide, activation peptide; that stretch reads AQAHASHQRRVPYPLPRFLPRPHHTVSNHR. One can recognise a Peptidase S1 domain in the interval 49–274; that stretch reads IVGGFEIDVA…VRDWIRETCG (226 aa). The cysteines at positions 74 and 90 are disulfide-linked. Residues His-89 and Asp-134 each act as charge relay system in the active site. Intrachain disulfides connect Cys-199-Cys-215 and Cys-226-Cys-250. The active-site Charge relay system is Ser-230.

This sequence belongs to the peptidase S1 family. Expressed in the midgut. Expression levels drop a few hours after blood feeding and pick up again 28 hours later.

It is found in the secreted. It catalyses the reaction Preferential cleavage: Arg-|-Xaa, Lys-|-Xaa.. In terms of biological role, constitutive trypsin that is expressed 2 days after emergence, coinciding with host seeking behavior of the female. This is Trypsin-4 (TRYP4) from Anopheles gambiae (African malaria mosquito).